Consider the following 34-residue polypeptide: Photosystem I reaction center subunit XII (34 aa).

Residues 4 to 24 traverse the membrane as a helical segment; the sequence is VLSAPEVFIALVVAAHAAVLA.

The protein belongs to the PsaM family.

The protein resides in the cellular thylakoid membrane. This chain is Photosystem I reaction center subunit XII, found in Synechococcus sp. (strain CC9605).